We begin with the raw amino-acid sequence, 620 residues long: Chaperone protein HscA homolog (620 aa).

It belongs to the heat shock protein 70 family.

In terms of biological role, chaperone involved in the maturation of iron-sulfur cluster-containing proteins. Has a low intrinsic ATPase activity which is markedly stimulated by HscB. The chain is Chaperone protein HscA homolog from Shewanella putrefaciens (strain CN-32 / ATCC BAA-453).